We begin with the raw amino-acid sequence, 522 residues long: DNA damage-binding protein CMR1 (522 aa).

Residues Ala-38 to Pro-100 form a disordered region. The span at Thr-54 to Ala-63 shows a compositional bias: polar residues. Ser-64 carries the phosphoserine modification. A Phosphothreonine modification is found at Thr-69. The segment covering Leu-75–Lys-84 has biased composition (basic and acidic residues). 7 WD repeats span residues Ile-183 to Ser-224, Leu-239 to Thr-281, Asp-287 to Asn-327, Leu-331 to Glu-371, Asp-388 to Ala-427, Gly-442 to Leu-481, and Pro-482 to Glu-521. Ser-224 is modified (phosphoserine).

Belongs to the WD repeat DDB2/WDR76 family.

The protein resides in the cytoplasm. Its subcellular location is the nucleus. Its function is as follows. DNA-binding protein that binds to both single- and double-stranded DNA. Binds preferentially to UV-damaged DNA in vitro. May be involved in DNA-metabolic processes. The chain is DNA damage-binding protein CMR1 from Saccharomyces cerevisiae (strain ATCC 204508 / S288c) (Baker's yeast).